The following is a 424-amino-acid chain: Phosphoribosylamine--glycine ligase (424 aa).

One can recognise an ATP-grasp domain in the interval 111 to 312; it reads KAFVKECGIK…LLDLCLATAK (202 aa). 137-189 contacts ATP; that stretch reads IQNASFPLVIKALNKNTSIVYQEEEAIKILEDAFKQSNEPVIIEPFLEGFELS.

The protein belongs to the GARS family.

It carries out the reaction 5-phospho-beta-D-ribosylamine + glycine + ATP = N(1)-(5-phospho-beta-D-ribosyl)glycinamide + ADP + phosphate + H(+). Its pathway is purine metabolism; IMP biosynthesis via de novo pathway; N(1)-(5-phospho-D-ribosyl)glycinamide from 5-phospho-alpha-D-ribose 1-diphosphate: step 2/2. The protein is Phosphoribosylamine--glycine ligase (purD) of Helicobacter pylori (strain ATCC 700392 / 26695) (Campylobacter pylori).